A 174-amino-acid chain; its full sequence is Squamosa promoter-binding-like protein 4 (174 aa).

A disordered region spans residues 1–42 (MEGKRSQGQGYMKKKSYLVEEDMETDTDEEEEVGRDRVRGSR). A compositionally biased stretch (acidic residues) spans 19 to 33 (VEEDMETDTDEEEEV). The SBP-type zinc-finger motif lies at 51–128 (LRLCQVDRCT…AGHNERRRKS (78 aa)). Zn(2+)-binding residues include Cys-54, Cys-59, Cys-76, His-79, Cys-95, Cys-98, His-102, and Cys-114. The Bipartite nuclear localization signal motif lies at 111-127 (KRSCRRRLAGHNERRRK). Residues 118–127 (LAGHNERRRK) are compositionally biased toward basic residues. 2 disordered regions span residues 118-148 (LAGHNERRRKSSGESTYGEGSGRRGINGQVV) and 155-174 (SRVEMTLPMPNSSFKRPQIR). Over residues 163–174 (MPNSSFKRPQIR) the composition is skewed to polar residues.

It depends on Zn(2+) as a cofactor. In terms of tissue distribution, expressed in the rib meristem and inter-primordial tissue of the inflorescence apex.

The protein localises to the nucleus. It is found in the cytoplasm. Trans-acting factor that binds specifically to the consensus nucleotide sequence 5'-TNCGTACAA-3' of AP1 promoter. Promotes both vegetative phase change and flowering. In Arabidopsis thaliana (Mouse-ear cress), this protein is Squamosa promoter-binding-like protein 4 (SPL4).